Reading from the N-terminus, the 362-residue chain is GDSL esterase/lipase At5g18430 (362 aa).

The first 19 residues, 1 to 19 (MTISTVIAFMSMFLVFVMS), serve as a signal peptide directing secretion. The active-site Nucleophile is the S35. N-linked (GlcNAc...) asparagine glycosylation occurs at N117. Catalysis depends on residues D327 and H330. The N-linked (GlcNAc...) asparagine glycan is linked to N355.

The protein belongs to the 'GDSL' lipolytic enzyme family.

It is found in the secreted. The polypeptide is GDSL esterase/lipase At5g18430 (Arabidopsis thaliana (Mouse-ear cress)).